Reading from the N-terminus, the 145-residue chain is Leghemoglobin (145 aa).

The Globin domain occupies 3-145 (GFTEKQEALV…ELAAALKKAF (143 aa)). Y26 and Y31 each carry nitrated tyrosine. H62 lines the O2 pocket. Residues K65, H93, and K96 each coordinate heme b. Y134 carries the nitrated tyrosine modification.

Belongs to the plant globin family. In terms of assembly, monomer. Nitrated in effective nodules and particularly in hypoxic conditions; this mechanism may play a protective role in the symbiosis by buffering toxic peroxynitrite NO(2)(-). Nitration level decrease during nodule senescence. Root nodules.

The protein resides in the cytoplasm. Its subcellular location is the cytosol. It is found in the nucleus. In terms of biological role, leghemoglobin that reversibly binds oxygen O(2) through a pentacoordinated heme iron. In root nodules, facilitates the diffusion of oxygen to the bacteroids while preventing the bacterial nitrogenase from being inactivated by buffering dioxygen, nitric oxide and carbon monoxide, and promoting the formation of reactive oxygen species (ROS, e.g. H(2)O(2)). This role is essential for symbiotic nitrogen fixation (SNF). In Psophocarpus tetragonolobus (Winged bean), this protein is Leghemoglobin.